Reading from the N-terminus, the 519-residue chain is Anthranilate synthase component 1 (519 aa).

Residues Thr40 and 293–295 (PYM) each bind L-tryptophan. Residue 330-331 (GT) coordinates chorismate. A Mg(2+)-binding site is contributed by Glu363. Chorismate contacts are provided by residues Tyr451, Arg471, 485-487 (GSG), and Gly487. Glu500 is a Mg(2+) binding site.

The protein belongs to the anthranilate synthase component I family. Heterotetramer consisting of two non-identical subunits: a beta subunit (TrpG) and a large alpha subunit (TrpE). It depends on Mg(2+) as a cofactor.

It catalyses the reaction chorismate + L-glutamine = anthranilate + pyruvate + L-glutamate + H(+). Its pathway is amino-acid biosynthesis; L-tryptophan biosynthesis; L-tryptophan from chorismate: step 1/5. Feedback inhibited by tryptophan. Part of a heterotetrameric complex that catalyzes the two-step biosynthesis of anthranilate, an intermediate in the biosynthesis of L-tryptophan. In the first step, the glutamine-binding beta subunit (TrpG) of anthranilate synthase (AS) provides the glutamine amidotransferase activity which generates ammonia as a substrate that, along with chorismate, is used in the second step, catalyzed by the large alpha subunit of AS (TrpE) to produce anthranilate. In the absence of TrpG, TrpE can synthesize anthranilate directly from chorismate and high concentrations of ammonia. The chain is Anthranilate synthase component 1 (trpE) from Buchnera aphidicola subsp. Diuraphis noxia.